Reading from the N-terminus, the 259-residue chain is GDP-perosamine N-formyltransferase (259 aa).

Residues 89 to 91 (SLI) and 139 to 143 (DENFD) contribute to the (6S)-5,6,7,8-tetrahydrofolate site.

The protein belongs to the Fmt family. Homodimer.

It carries out the reaction GDP-alpha-D-perosamine + (6R)-10-formyltetrahydrofolate = GDP-N-formyl-alpha-D-perosamine + (6S)-5,6,7,8-tetrahydrofolate + H(+). It functions in the pathway bacterial outer membrane biogenesis; lipopolysaccharide biosynthesis. Its function is as follows. Involved in the lipopolysaccharide (LPS) O-antigen biosynthesis. Catalyzes the transfer of a formyl group to GDP-perosamine, leading to the formation of GDP-N-formylperosamine. Is critical for full bacterial virulence. This Brucella abortus (strain 2308) protein is GDP-perosamine N-formyltransferase.